Reading from the N-terminus, the 348-residue chain is Serine/threonine-protein kinase SBK2 (348 aa).

The tract at residues 1–25 is disordered; the sequence is MPGKQSEEGPAEAGASEDSEEEGLG. Residues 62-330 form the Protein kinase domain; sequence YEEVRPLGQG…IREHLGRPWR (269 aa). Residues 68 to 76 and Lys-91 each bind ATP; that span reads LGQGCYGRV. The active-site Proton acceptor is Asp-183.

This sequence belongs to the protein kinase superfamily. Ser/Thr protein kinase family. STKL subfamily.

The enzyme catalyses L-seryl-[protein] + ATP = O-phospho-L-seryl-[protein] + ADP + H(+). It carries out the reaction L-threonyl-[protein] + ATP = O-phospho-L-threonyl-[protein] + ADP + H(+). The chain is Serine/threonine-protein kinase SBK2 (SBK2) from Homo sapiens (Human).